Here is a 381-residue protein sequence, read N- to C-terminus: MKKLKVSKMEILVRYGEIGLKSDPIRKNLEEILRKNIIKLLRKYEIDAEVKILHRKLLVKINTKDKEDLALKLLKKVAGIVSYSPVYECPLDINEIVSFAVQIMKKKLKTLNKEKVTFAVKTKRSYKKFPFTSVEVNKKVGEAIVEKLGLEVDLENPDIVLGIEILNDGAYIFTEKYEGIGGLPAGSQGKVLCLISDGIDSPVAAFMMIRRGCRAVLLHLKMSEEALNKVRKIVEVLSDYDTELEFVVYDYKKDIEDIVEKLKSIKKENYTCIFCKRKMLKVAEKYAKYLDCDAIVTGDNLGQVASQTLKNLRVISENINYPILRPLIGLDKNDIVKIAKEIGTYEISTEKEIKCPYLPKHPKTIAKPEEVKKIKEKVKLV.

The THUMP domain occupies 68-176 (DLALKLLKKV…NDGAYIFTEK (109 aa)). ATP is bound by residues 194-195 (LI), K276, G298, and Q307.

Belongs to the ThiI family.

It is found in the cytoplasm. It carries out the reaction [ThiI sulfur-carrier protein]-S-sulfanyl-L-cysteine + a uridine in tRNA + 2 reduced [2Fe-2S]-[ferredoxin] + ATP + H(+) = [ThiI sulfur-carrier protein]-L-cysteine + a 4-thiouridine in tRNA + 2 oxidized [2Fe-2S]-[ferredoxin] + AMP + diphosphate. The catalysed reaction is [ThiS sulfur-carrier protein]-C-terminal Gly-Gly-AMP + S-sulfanyl-L-cysteinyl-[cysteine desulfurase] + AH2 = [ThiS sulfur-carrier protein]-C-terminal-Gly-aminoethanethioate + L-cysteinyl-[cysteine desulfurase] + A + AMP + 2 H(+). It participates in cofactor biosynthesis; thiamine diphosphate biosynthesis. Catalyzes the ATP-dependent transfer of a sulfur to tRNA to produce 4-thiouridine in position 8 of tRNAs, which functions as a near-UV photosensor. Also catalyzes the transfer of sulfur to the sulfur carrier protein ThiS, forming ThiS-thiocarboxylate. This is a step in the synthesis of thiazole, in the thiamine biosynthesis pathway. The sulfur is donated as persulfide by IscS. The polypeptide is Probable tRNA sulfurtransferase (Methanocaldococcus jannaschii (strain ATCC 43067 / DSM 2661 / JAL-1 / JCM 10045 / NBRC 100440) (Methanococcus jannaschii)).